The following is a 243-amino-acid chain: UDP-2,3-diacylglucosamine hydrolase (243 aa).

Mn(2+) is bound by residues Asp8, His10, Asp41, Asn79, and His114. 79–80 (NR) serves as a coordination point for substrate. Asp122, Lys164, Lys167, and His195 together coordinate substrate. 2 residues coordinate Mn(2+): His195 and His197.

The protein belongs to the LpxH family. The cofactor is Mn(2+).

It is found in the cell inner membrane. It catalyses the reaction UDP-2-N,3-O-bis[(3R)-3-hydroxytetradecanoyl]-alpha-D-glucosamine + H2O = 2-N,3-O-bis[(3R)-3-hydroxytetradecanoyl]-alpha-D-glucosaminyl 1-phosphate + UMP + 2 H(+). Its pathway is glycolipid biosynthesis; lipid IV(A) biosynthesis; lipid IV(A) from (3R)-3-hydroxytetradecanoyl-[acyl-carrier-protein] and UDP-N-acetyl-alpha-D-glucosamine: step 4/6. Hydrolyzes the pyrophosphate bond of UDP-2,3-diacylglucosamine to yield 2,3-diacylglucosamine 1-phosphate (lipid X) and UMP by catalyzing the attack of water at the alpha-P atom. Involved in the biosynthesis of lipid A, a phosphorylated glycolipid that anchors the lipopolysaccharide to the outer membrane of the cell. The sequence is that of UDP-2,3-diacylglucosamine hydrolase from Vibrio vulnificus (strain CMCP6).